Here is a 352-residue protein sequence, read N- to C-terminus: Minor capsid protein VP2 (352 aa).

Glycine 2 carries the N-myristoyl glycine; by host lipid modification. The interval 273-308 (SGEFIEKFEAPGGANQRTAPQWMLPLLLGLYGSVTS) is D1. A helical transmembrane segment spans residues 290–310 (TAPQWMLPLLLGLYGSVTSAL). The disordered stretch occupies residues 313–352 (YEDGPNKKKRKLSRGSSQKTKGTSASAKARHKRRNRSSRS). The segment at 313–352 (YEDGPNKKKRKLSRGSSQKTKGTSASAKARHKRRNRSSRS) is DNA-binding. The Nuclear localization signal signature appears at 316–324 (GPNKKKRKL). Over residues 326-338 (RGSSQKTKGTSAS) the composition is skewed to polar residues. Residues 340-352 (KARHKRRNRSSRS) show a composition bias toward basic residues.

The protein belongs to the polyomaviruses capsid protein VP2 family. In terms of assembly, forms homooligomers, and heterooligomers with VP3 in the endoplasmic reticulum membrane. Interacts (via D1 domain) with VP1. As to quaternary structure, interacts (via D1 domain) with VP1. Interacts (via C-terminus) with host SP1, this is probably also the case for VP2; this interaction represses SP1 activation of the SV40 early promoter and participates in virion assembly. Interacts (via nuclear localization signal) with host importin alpha2-beta heterodimer. Oligomerizes with VP3 in the nucleus.

Its subcellular location is the virion. The protein localises to the host nucleus. It localises to the host endoplasmic reticulum. It is found in the host endoplasmic reticulum membrane. Structural protein that resides within the core of the capsid surrounded by 72 VP1 pentamers. Following virus endocytosis and trafficking to the endoplasmic reticulum, VP2 and VP3 form oligomers and integrate into the endoplasmic reticulum membrane. Heterooligomer VP2-VP3 may create a viroporin for transporting the viral genome across the endoplasmic reticulum membrane to the cytoplasm. Nuclear entry of the viral DNA involves the selective exposure and importin recognition of VP2 or VP3 nuclear localization signal (shared C-terminus). Plays a role in virion assembly within the nucleus in particular through a DNA-binding domain located in the C-terminal region. An N-terminal myristoylation suggests a scaffold function for virion assembly. The viral progenies exit the cells by lytic release. Isoform VP2 may repress SP1 activation of the SV40 early promoter, via specific protein-protein and protein-DNA interactions. Functionally, structural protein that resides within the core of the capsid surrounded by 72 VP1 pentamers. Following virus entry, VP2 and VP3 form oligomers and integrate into the endoplasmic reticulum membrane. Heterooligomer VP2-VP3 may create a viroporin for transporting the viral genome across the endoplasmic reticulum membrane. Essential for focus formation and virus endoplasmic reticulum-to-cytosol membrane transport, required to recruit selective cellular components to the foci in the ER membrane. Nuclear entry of the viral DNA involves the selective exposure and importin recognition of VP2 or VP3 nuclear localization signal (shared C-terminus). Isoform VP3 represses SP1 activation of the SV40 early promoter, via specific protein-protein and protein-DNA interactions. SP1 additionally participates in recruiting VP3 to the SV40 minichromosome during SV40 assembly. Plays a role in virion assembly within the nucleus. May initiate host cell lysis when associated with VP4. Its function is as follows. Viroporin inducing perforation of cellular membranes to trigger virus progeny release. Forms pores of 3 nm inner diameter. VP4 is expressed about 24 hours after the late structural proteins and is not incorporated into the mature virion. This Simian virus 40 (SV40) protein is Minor capsid protein VP2.